The primary structure comprises 269 residues: Protein tio (269 aa).

The segment covering 1–12 (MANEPQEHEEGK) has biased composition (basic and acidic residues). The interval 1–127 (MANEPQEHEE…NETKCPDEQN (127 aa)) is disordered. Residues 1–246 (MANEPQEHEE…VEKKLTCVIC (246 aa)) lie on the Cytoplasmic side of the membrane. The segment covering 27 to 41 (PNIPQDPTPGTPPGP) has biased composition (pro residues). Positions 61–74 (SEGPPDGSGNSSPP) are enriched in low complexity. 2 stretches are compositionally biased toward polar residues: residues 91 to 101 (SESGGNNSAPN) and 114 to 127 (AGNGNETKCPDEQN). Tyr-136 bears the Phosphotyrosine; by host LCK mark. The CSKH/LBD2 stretch occupies residues 158 to 167 (EEERSPFNKY). Residues 186-195 (IPPPQLPPRP) are SH3B/LBD1. A helical membrane pass occupies residues 247–267 (LLIGILVLLILLFMLGFLFLL). Residues 268–269 (MK) lie on the Extracellular side of the membrane.

Homodimer. Binds SH3 domain of host LYN, HCK, LCK, SRC, FYN or YES. When tyrosine-phosphorylated, binds to the SH2 domain of host LCK, SRC, or FYN. Post-translationally, phosphorylated by host LCK, SRC and less efficiently by FYN.

It is found in the host cell membrane. Transforms host T-cells, inducing T-cell lymphomia in the host. Activates at least SRC and LCK tyrosines kinases, thereby activating signaling pathway transforming host T-cells. Human T-cells transformed ex vivo display a IL2 indenpendent growth phenotype. The polypeptide is Protein tio (Ateles (AtHV-3)).